The following is a 396-amino-acid chain: Large ribosomal subunit protein uL4A (396 aa).

Basic and acidic residues predominate over residues Lys352–Thr373. Positions Lys352–Lys374 are disordered.

The protein belongs to the universal ribosomal protein uL4 family. As to quaternary structure, component of the large ribosomal subunit.

The protein localises to the cytoplasm. Functionally, component of the large ribosomal subunit. The ribosome is a large ribonucleoprotein complex responsible for the synthesis of proteins in the cell. This is Large ribosomal subunit protein uL4A (rpl4-a) from Xenopus laevis (African clawed frog).